The primary structure comprises 248 residues: tRNA (guanine-N(1)-)-methyltransferase (248 aa).

Residues Gly-113 and 133–138 (IGDFVL) contribute to the S-adenosyl-L-methionine site.

This sequence belongs to the RNA methyltransferase TrmD family. Homodimer.

It is found in the cytoplasm. It catalyses the reaction guanosine(37) in tRNA + S-adenosyl-L-methionine = N(1)-methylguanosine(37) in tRNA + S-adenosyl-L-homocysteine + H(+). Specifically methylates guanosine-37 in various tRNAs. The chain is tRNA (guanine-N(1)-)-methyltransferase from Dehalococcoides mccartyi (strain CBDB1).